The primary structure comprises 419 residues: Adenylosuccinate synthetase (419 aa).

GTP-binding positions include 12–18 and 40–42; these read GDEGKGK and GHT. Residue Asp13 is the Proton acceptor of the active site. Residues Asp13 and Gly40 each coordinate Mg(2+). IMP is bound by residues 13–16, 38–41, Thr128, Arg142, Gln220, Thr235, and Arg299; these read DEGK and NAGH. The active-site Proton donor is His41. 295-301 is a binding site for substrate; that stretch reads SITKRPR. GTP is bound by residues Arg301, 327 to 329, and 407 to 409; these read KSD and SLG.

It belongs to the adenylosuccinate synthetase family. Homodimer. The cofactor is Mg(2+).

It is found in the cytoplasm. It carries out the reaction IMP + L-aspartate + GTP = N(6)-(1,2-dicarboxyethyl)-AMP + GDP + phosphate + 2 H(+). It participates in purine metabolism; AMP biosynthesis via de novo pathway; AMP from IMP: step 1/2. Plays an important role in the de novo pathway of purine nucleotide biosynthesis. Catalyzes the first committed step in the biosynthesis of AMP from IMP. The protein is Adenylosuccinate synthetase of Azobacteroides pseudotrichonymphae genomovar. CFP2.